The sequence spans 539 residues: Chaperonin GroEL (539 aa).

Residues 29–32 (TLGP), 86–90 (DGTTT), glycine 413, 477–479 (NAA), and aspartate 493 each bind ATP.

Belongs to the chaperonin (HSP60) family. In terms of assembly, forms a cylinder of 14 subunits composed of two heptameric rings stacked back-to-back. Interacts with the co-chaperonin GroES.

Its subcellular location is the cytoplasm. The enzyme catalyses ATP + H2O + a folded polypeptide = ADP + phosphate + an unfolded polypeptide.. In terms of biological role, together with its co-chaperonin GroES, plays an essential role in assisting protein folding. The GroEL-GroES system forms a nano-cage that allows encapsulation of the non-native substrate proteins and provides a physical environment optimized to promote and accelerate protein folding. The sequence is that of Chaperonin GroEL from Leifsonia xyli subsp. xyli (strain CTCB07).